A 270-amino-acid chain; its full sequence is Orotidine 5'-phosphate decarboxylase (270 aa).

Lysine 89 serves as the catalytic Proton donor.

Belongs to the OMP decarboxylase family. Type 2 subfamily.

It catalyses the reaction orotidine 5'-phosphate + H(+) = UMP + CO2. It functions in the pathway pyrimidine metabolism; UMP biosynthesis via de novo pathway; UMP from orotate: step 2/2. The chain is Orotidine 5'-phosphate decarboxylase from Dehalococcoides mccartyi (strain ATCC BAA-2266 / KCTC 15142 / 195) (Dehalococcoides ethenogenes (strain 195)).